A 499-amino-acid polypeptide reads, in one-letter code: Ent-kaurenoic acid oxidase 1 (499 aa).

A helical membrane pass occupies residues 5-25 (AWWAVAAVVAALAVVALDAAV). Cys-443 is a binding site for heme.

This sequence belongs to the cytochrome P450 family. Heme is required as a cofactor.

It localises to the endoplasmic reticulum membrane. The catalysed reaction is ent-kaur-16-en-19-oate + 3 reduced [NADPH--hemoprotein reductase] + 3 O2 = gibberellin A12 + 3 oxidized [NADPH--hemoprotein reductase] + 4 H2O + 4 H(+). It carries out the reaction ent-kaur-16-en-19-oate + reduced [NADPH--hemoprotein reductase] + O2 = ent-7alpha-hydroxykaur-16-en-19-oate + oxidized [NADPH--hemoprotein reductase] + H2O + H(+). It catalyses the reaction ent-7alpha-hydroxykaur-16-en-19-oate + reduced [NADPH--hemoprotein reductase] + O2 = gibberellin A12 aldehyde + oxidized [NADPH--hemoprotein reductase] + 2 H2O + H(+). The enzyme catalyses gibberellin A12 aldehyde + reduced [NADPH--hemoprotein reductase] + O2 = gibberellin A12 + oxidized [NADPH--hemoprotein reductase] + H2O + 2 H(+). It functions in the pathway plant hormone biosynthesis; gibberellin biosynthesis. In terms of biological role, catalyzes three successive oxidations of ent-kaurenoic acid giving gibberellin 12 (GA12), a key step in gibberellins (GAs) biosynthesis. GAs, which are involved many processes, including stem elongation, play a central role in plant development. This is Ent-kaurenoic acid oxidase 1 from Hordeum vulgare (Barley).